Here is a 304-residue protein sequence, read N- to C-terminus: Phospholipase A1 (304 aa).

Cysteine 6 and cysteine 90 are disulfide-bonded. A glycan (N-linked (GlcNAc...) asparagine) is linked at asparagine 61. Serine 140 functions as the Nucleophile in the catalytic mechanism. Aspartate 168 functions as the Charge relay system in the catalytic mechanism. Intrachain disulfides connect cysteine 179/cysteine 184 and cysteine 222/cysteine 231. Histidine 233 serves as the catalytic Charge relay system. 3 disulfides stabilise this stretch: cysteine 248-cysteine 272, cysteine 249-cysteine 297, and cysteine 265-cysteine 270.

This sequence belongs to the AB hydrolase superfamily. Lipase family. In terms of tissue distribution, expressed by the venom gland.

The protein resides in the secreted. It carries out the reaction a 1,2-diacyl-sn-glycero-3-phosphocholine + H2O = a 2-acyl-sn-glycero-3-phosphocholine + a fatty acid + H(+). Functionally, catalyzes the hydrolysis of phosphatidylcholine with phospholipase A1 activity. May act as an allergen and induce hemolytic activity. In Vespa velutina (Asian yellow-legged hornet), this protein is Phospholipase A1.